A 571-amino-acid chain; its full sequence is Dihydroxy-acid dehydratase (571 aa).

Position 56 (cysteine 56) interacts with [2Fe-2S] cluster. Aspartate 88 contacts Mg(2+). Cysteine 129 provides a ligand contact to [2Fe-2S] cluster. Mg(2+)-binding residues include aspartate 130 and lysine 131. Residue lysine 131 is modified to N6-carboxylysine. Position 201 (cysteine 201) interacts with [2Fe-2S] cluster. Glutamate 452 is a binding site for Mg(2+). Catalysis depends on serine 478, which acts as the Proton acceptor.

It belongs to the IlvD/Edd family. Homodimer. The cofactor is [2Fe-2S] cluster. Mg(2+) serves as cofactor.

It catalyses the reaction (2R)-2,3-dihydroxy-3-methylbutanoate = 3-methyl-2-oxobutanoate + H2O. The enzyme catalyses (2R,3R)-2,3-dihydroxy-3-methylpentanoate = (S)-3-methyl-2-oxopentanoate + H2O. The protein operates within amino-acid biosynthesis; L-isoleucine biosynthesis; L-isoleucine from 2-oxobutanoate: step 3/4. It participates in amino-acid biosynthesis; L-valine biosynthesis; L-valine from pyruvate: step 3/4. Its function is as follows. Functions in the biosynthesis of branched-chain amino acids. Catalyzes the dehydration of (2R,3R)-2,3-dihydroxy-3-methylpentanoate (2,3-dihydroxy-3-methylvalerate) into 2-oxo-3-methylpentanoate (2-oxo-3-methylvalerate) and of (2R)-2,3-dihydroxy-3-methylbutanoate (2,3-dihydroxyisovalerate) into 2-oxo-3-methylbutanoate (2-oxoisovalerate), the penultimate precursor to L-isoleucine and L-valine, respectively. The chain is Dihydroxy-acid dehydratase from Streptococcus mutans serotype c (strain ATCC 700610 / UA159).